Reading from the N-terminus, the 255-residue chain is MLDSVTHSTFLPNTSFCDPLMSWTDLFSNEEYYPAFEHQTACDSYWTSVHPEYWTKRHVWEWLQFCCDQYKLDANCISFCHFNISGLQLCGMTQEEFMEAAGVCGEYLYFILQSIRSQGYSFFNDPDETKATLKDYADSSCLKTSGIKSQDCHSHSRTSLQSSHLWEFVRDLLLSPEENCGILEWEDREQGIFRVVKSEALAKMWGQRKKNDRMTYEKLSRALRYYYKTGILERVDRRLVYKFGKNAHGWQEDKL.

The 87-residue stretch at 33-119 (YPAFEHQTAC…FILQSIRSQG (87 aa)) folds into the PNT domain. Positions 163-244 (SHLWEFVRDL…VDRRLVYKFG (82 aa)) form a DNA-binding region, ETS.

It belongs to the ETS family.

Its subcellular location is the nucleus. Functionally, transcriptionally activator that may play a role in regulating the later stages of keratinocytes terminal differentiation. Binds to DNA sequences containing the consensus nucleotide core sequence GGA[AT]. This is ETS-related transcription factor Elf-5 (ELF5) from Bos taurus (Bovine).